The following is a 100-amino-acid chain: ATP phosphoribosyltransferase (100 aa).

It belongs to the ATP phosphoribosyltransferase family. Long subfamily. As to quaternary structure, equilibrium between an active dimeric form, an inactive hexameric form and higher aggregates. Interconversion between the various forms is largely reversible and is influenced by the natural substrates and inhibitors of the enzyme. Mg(2+) is required as a cofactor.

It is found in the cytoplasm. It catalyses the reaction 1-(5-phospho-beta-D-ribosyl)-ATP + diphosphate = 5-phospho-alpha-D-ribose 1-diphosphate + ATP. Its pathway is amino-acid biosynthesis; L-histidine biosynthesis; L-histidine from 5-phospho-alpha-D-ribose 1-diphosphate: step 1/9. With respect to regulation, feedback inhibited by histidine. Catalyzes the condensation of ATP and 5-phosphoribose 1-diphosphate to form N'-(5'-phosphoribosyl)-ATP (PR-ATP). Has a crucial role in the pathway because the rate of histidine biosynthesis seems to be controlled primarily by regulation of HisG enzymatic activity. This chain is ATP phosphoribosyltransferase (hisG), found in Klebsiella pneumoniae.